A 436-amino-acid polypeptide reads, in one-letter code: Trigger factor (436 aa).

The 86-residue stretch at 162–247 folds into the PPIase FKBP-type domain; the sequence is GDRVIIDFEG…LNNVSEPTLP (86 aa).

The protein belongs to the FKBP-type PPIase family. Tig subfamily.

It localises to the cytoplasm. It carries out the reaction [protein]-peptidylproline (omega=180) = [protein]-peptidylproline (omega=0). Involved in protein export. Acts as a chaperone by maintaining the newly synthesized protein in an open conformation. Functions as a peptidyl-prolyl cis-trans isomerase. This Neisseria gonorrhoeae (strain ATCC 700825 / FA 1090) protein is Trigger factor.